Reading from the N-terminus, the 505-residue chain is Glutamate--tRNA ligase (505 aa).

The short motif at 12 to 22 (PSPTGPLHIGG) is the 'HIGH' region element. The 'KMSKS' region signature appears at 260–264 (KLSKR). Lys263 lines the ATP pocket.

It belongs to the class-I aminoacyl-tRNA synthetase family. Glutamate--tRNA ligase type 1 subfamily. In terms of assembly, monomer.

Its subcellular location is the cytoplasm. The enzyme catalyses tRNA(Glu) + L-glutamate + ATP = L-glutamyl-tRNA(Glu) + AMP + diphosphate. Catalyzes the attachment of glutamate to tRNA(Glu) in a two-step reaction: glutamate is first activated by ATP to form Glu-AMP and then transferred to the acceptor end of tRNA(Glu). This is Glutamate--tRNA ligase from Porphyromonas gingivalis (strain ATCC BAA-308 / W83).